The primary structure comprises 309 residues: Integral membrane protein sed5 (309 aa).

Residues 1-288 (MSFQDRTAEF…KFYERMSSNR (288 aa)) lie on the Cytoplasmic side of the membrane. A coiled-coil region spans residues 37–66 (KHQKSEFTRIAQKIANQINQTGEKLQKLSQ). The t-SNARE coiled-coil homology domain maps to 218 to 280 (DTYSQQRMSS…GSAQREIVKF (63 aa)). The chain crosses the membrane as a helical; Anchor for type IV membrane protein span at residues 289–308 (ALLFKIFGIVIIFFLLWVLV). A topological domain (vesicular) is located at residue T309.

It belongs to the syntaxin family.

The protein resides in the membrane. Its subcellular location is the golgi apparatus membrane. Required for vesicular transport between the endoplasmic reticulum and the Golgi complex. Acts as a target organelle soluble NSF attachment protein receptor (t-SNARE). The chain is Integral membrane protein sed5 (sed5) from Schizosaccharomyces pombe (strain 972 / ATCC 24843) (Fission yeast).